Consider the following 287-residue polypeptide: Small ribosomal subunit protein uS2 (287 aa).

Residues glutamate 235–tryptophan 287 are disordered. The span at alanine 247 to alanine 261 shows a compositional bias: low complexity.

Belongs to the universal ribosomal protein uS2 family. Component of the small ribosomal subunit. Mature ribosomes consist of a small (40S) and a large (60S) subunit. The 40S subunit contains about 33 different proteins and 1 molecule of RNA (18S). The 60S subunit contains about 49 different proteins and 3 molecules of RNA (25S, 5.8S and 5S). Interacts with RPS21.

The protein resides in the cytoplasm. In terms of biological role, required for the assembly and/or stability of the 40S ribosomal subunit. Required for the processing of the 20S rRNA-precursor to mature 18S rRNA in a late step of the maturation of 40S ribosomal subunits. In Pyricularia oryzae (strain 70-15 / ATCC MYA-4617 / FGSC 8958) (Rice blast fungus), this protein is Small ribosomal subunit protein uS2.